The following is a 705-amino-acid chain: Elongation factor G (705 aa).

Residues 8–290 (ERYRNFGIMA…GVVHLLPSPA (283 aa)) enclose the tr-type G domain. Residues 17–24 (AHIDAGKT), 88–92 (DTPGH), and 142–145 (NKMD) contribute to the GTP site. The tract at residues 290-309 (ADRPPVQGIDENEKEDTRDA) is disordered.

This sequence belongs to the TRAFAC class translation factor GTPase superfamily. Classic translation factor GTPase family. EF-G/EF-2 subfamily.

The protein resides in the cytoplasm. Functionally, catalyzes the GTP-dependent ribosomal translocation step during translation elongation. During this step, the ribosome changes from the pre-translocational (PRE) to the post-translocational (POST) state as the newly formed A-site-bound peptidyl-tRNA and P-site-bound deacylated tRNA move to the P and E sites, respectively. Catalyzes the coordinated movement of the two tRNA molecules, the mRNA and conformational changes in the ribosome. This chain is Elongation factor G, found in Xanthomonas campestris pv. campestris (strain 8004).